The chain runs to 91 residues: DNA-directed RNA polymerase subunit omega (91 aa).

The protein belongs to the RNA polymerase subunit omega family. The RNAP catalytic core consists of 2 alpha, 1 beta, 1 beta' and 1 omega subunit. When a sigma factor is associated with the core the holoenzyme is formed, which can initiate transcription.

It catalyses the reaction RNA(n) + a ribonucleoside 5'-triphosphate = RNA(n+1) + diphosphate. Its function is as follows. Promotes RNA polymerase assembly. Latches the N- and C-terminal regions of the beta' subunit thereby facilitating its interaction with the beta and alpha subunits. This chain is DNA-directed RNA polymerase subunit omega, found in Edwardsiella ictaluri (strain 93-146).